A 272-amino-acid polypeptide reads, in one-letter code: Phosphonates import ATP-binding protein PhnC 1 (272 aa).

In terms of domain architecture, ABC transporter spans 2–246 (LRIQALTKTY…VLTSIYGEED (245 aa)). An ATP-binding site is contributed by 35–42 (GPSGAGKS).

It belongs to the ABC transporter superfamily. Phosphonates importer (TC 3.A.1.9.1) family. The complex is composed of two ATP-binding proteins (PhnC), two transmembrane proteins (PhnE) and a solute-binding protein (PhnD).

The protein localises to the cell inner membrane. It carries out the reaction phosphonate(out) + ATP + H2O = phosphonate(in) + ADP + phosphate + H(+). Functionally, part of the ABC transporter complex PhnCDE involved in phosphonates import. Responsible for energy coupling to the transport system. This chain is Phosphonates import ATP-binding protein PhnC 1, found in Rhodopseudomonas palustris (strain BisB18).